A 402-amino-acid polypeptide reads, in one-letter code: N-acetyllactosaminide beta-1,6-N-acetylglucosaminyl-transferase (402 aa).

The Cytoplasmic segment spans residues 1–7 (MMGSWKH). The chain crosses the membrane as a helical; Signal-anchor for type II membrane protein span at residues 8 to 23 (CLFSASLISALIFVFV). Residues 24-400 (YNTELWENKR…QSETAIQPSW (377 aa)) lie on the Lumenal side of the membrane. N-linked (GlcNAc...) asparagine glycosylation is present at asparagine 41.

It belongs to the glycosyltransferase 14 family. As to expression, expressed in lens epithelium cells. Expressed in reticulocytes.

It is found in the golgi apparatus membrane. It catalyses the reaction a beta-D-Gal-(1-&gt;4)-beta-D-GlcNAc-(1-&gt;3)-beta-D-Gal-(1-&gt;4)-beta-D-GlcNAc derivative + UDP-N-acetyl-alpha-D-glucosamine = a beta-D-Gal-(1-&gt;4)-beta-D-GlcNAc-(1-&gt;3)-[beta-D-GlcNAc-(1-&gt;6)]-beta-D-Gal-(1-&gt;4)-N-acetyl-beta-D-glucosaminyl derivative + UDP + H(+). The protein operates within protein modification; protein glycosylation. Branching enzyme that converts linear into branched poly-N-acetyllactosaminoglycans. Introduces the blood group I antigen during embryonic development. It is closely associated with the development and maturation of erythroid cells. Its function is as follows. Determines the expression of the blood group I antigen in erythrocytes. The protein is N-acetyllactosaminide beta-1,6-N-acetylglucosaminyl-transferase (GCNT2) of Homo sapiens (Human).